Consider the following 739-residue polypeptide: Catalase-peroxidase 2 (739 aa).

The signal sequence occupies residues 1-26 (MKKSTIPSMSALTLAMSLAFGGAAIA). The tryptophyl-tyrosyl-methioninium (Trp-Tyr) (with M-253) cross-link spans 105 to 227 (WHSAGVYRIF…MGATQMGLIY (123 aa)). The Proton acceptor role is filled by His106. Residues 227–253 (YVNPEGPNGVPDPLASAKEIRDTFGRM) constitute a cross-link (tryptophyl-tyrosyl-methioninium (Tyr-Met) (with W-105)). His268 serves as a coordination point for heme b.

It belongs to the peroxidase family. Peroxidase/catalase subfamily. As to quaternary structure, homodimer or homotetramer. Heme b serves as cofactor. Post-translationally, formation of the three residue Trp-Tyr-Met cross-link is important for the catalase, but not the peroxidase activity of the enzyme.

The enzyme catalyses H2O2 + AH2 = A + 2 H2O. It carries out the reaction 2 H2O2 = O2 + 2 H2O. In terms of biological role, bifunctional enzyme with both catalase and broad-spectrum peroxidase activity. This chain is Catalase-peroxidase 2, found in Shewanella sp. (strain ANA-3).